A 101-amino-acid chain; its full sequence is Cell division suppressor protein YneA (101 aa).

The 52-residue stretch at 35 to 86 (MTVTVASGDTLWGLAKQYEPAHGLSPDEFIRWVVDVNRLPSSRLTAGEQIVI) folds into the LysM domain.

It belongs to the YneA family.

It is found in the cytoplasm. Functionally, inhibits cell division during the SOS response. Affects a later stage of the cell division protein assembly, after the assembly of the Z ring, by probably suppressing recruitment of FtsL and/or DivIC to the division machinery. The chain is Cell division suppressor protein YneA from Geobacillus thermodenitrificans (strain NG80-2).